Consider the following 409-residue polypeptide: Failed axon connections homolog (409 aa).

The helical transmembrane segment at 68–88 threads the bilayer; sequence YLTGGALLAAAAYLLHELLVI. The tract at residues 372–409 is disordered; it reads DEGAENSFSRTPDTDFTGHSLFDSDVDMDDYTEHEQCK.

It belongs to the FAX family.

Its subcellular location is the membrane. Functionally, may play a role in axonal development. The protein is Failed axon connections homolog (Faxc) of Rattus norvegicus (Rat).